The sequence spans 149 residues: Deoxyuridine 5'-triphosphate nucleotidohydrolase (149 aa).

Residues 68 to 70, Asn81, and 85 to 87 each bind substrate; these read RSG and LID.

The protein belongs to the dUTPase family. The cofactor is Mg(2+).

The enzyme catalyses dUTP + H2O = dUMP + diphosphate + H(+). The protein operates within pyrimidine metabolism; dUMP biosynthesis; dUMP from dCTP (dUTP route): step 2/2. This enzyme is involved in nucleotide metabolism: it produces dUMP, the immediate precursor of thymidine nucleotides and it decreases the intracellular concentration of dUTP so that uracil cannot be incorporated into DNA. The polypeptide is Deoxyuridine 5'-triphosphate nucleotidohydrolase (Aromatoleum aromaticum (strain DSM 19018 / LMG 30748 / EbN1) (Azoarcus sp. (strain EbN1))).